The chain runs to 545 residues: Pentatricopeptide repeat-containing protein At4g18840 (545 aa).

11 PPR repeats span residues 104–138 (NGFT…PVFP), 139–173 (DKYS…GLVT), 174–204 (DVFV…MPVR), 205–239 (DAVS…NVES), 240–266 (WNFM…MPVR), 267–301 (DVVS…STEK), 303–337 (DGFT…GIEI), 338–368 (EGFL…TSKR), 369–403 (DVST…GFKP), 404–434 (NGIT…MSSV), and 440–474 (TIEH…EASI). Positions 475–545 (LLESLLGACK…ERVNRSLDVA (71 aa)) are type E motif.

It belongs to the PPR family. PCMP-E subfamily.

In Arabidopsis thaliana (Mouse-ear cress), this protein is Pentatricopeptide repeat-containing protein At4g18840 (PCMP-E101).